Here is a 627-residue protein sequence, read N- to C-terminus: Glucokinase regulatory protein (627 aa).

SIS domains are found at residues 90 to 286 (VQEV…QGVV) and 320 to 499 (VGIS…LLGK). Residues 109–110 (TS), glutamate 153, and 179–181 (SVG) contribute to the beta-D-fructose 1-phosphate site. Beta-D-fructose 6-phosphate is bound at residue 109–110 (TS). Residue 179–181 (SVG) coordinates beta-D-fructose 6-phosphate. The interval 199–200 (AV) is important for interaction with GCK. Glutamate 348 contributes to the beta-D-fructose 1-phosphate binding site. Residues 463–465 (LLF) form an essential for interaction with GCK region. A beta-D-fructose 1-phosphate-binding site is contributed by lysine 514. Lysine 514 serves as a coordination point for beta-D-fructose 6-phosphate.

This sequence belongs to the GCKR family. In terms of assembly, interacts (fructose 6-phosphate bound form) with GCK. In terms of tissue distribution, detected in liver (at protein level). Not detected in muscle, brain, heart, testis, intestine or spleen.

Its subcellular location is the cytoplasm. The protein resides in the nucleus. It localises to the mitochondrion. Functionally, regulates glucokinase (GCK) by forming an inactive complex with this enzyme. Acts by promoting GCK recruitment to the nucleus, possibly to provide a reserve of GCK that can be quickly released in the cytoplasm after a meal. The affinity of GCKR for GCK is modulated by fructose metabolites: GCKR with bound fructose 6-phosphate has increased affinity for GCK, while GCKR with bound fructose 1-phosphate has strongly decreased affinity for GCK and does not inhibit GCK activity. The protein is Glucokinase regulatory protein of Rattus norvegicus (Rat).